The chain runs to 498 residues: ATP synthase subunit beta, chloroplastic (498 aa).

Thr-6 is modified (phosphothreonine). Position 13 is a phosphoserine (Ser-13). 172–179 (GGAGVGKT) serves as a coordination point for ATP.

It belongs to the ATPase alpha/beta chains family. In terms of assembly, F-type ATPases have 2 components, CF(1) - the catalytic core - and CF(0) - the membrane proton channel. CF(1) has five subunits: alpha(3), beta(3), gamma(1), delta(1), epsilon(1). CF(0) has four main subunits: a(1), b(1), b'(1) and c(9-12).

The protein localises to the plastid. It localises to the chloroplast thylakoid membrane. The catalysed reaction is ATP + H2O + 4 H(+)(in) = ADP + phosphate + 5 H(+)(out). In terms of biological role, produces ATP from ADP in the presence of a proton gradient across the membrane. The catalytic sites are hosted primarily by the beta subunits. The protein is ATP synthase subunit beta, chloroplastic of Brassica napus (Rape).